The primary structure comprises 284 residues: Bifunctional protein FolD (284 aa).

NADP(+)-binding positions include 166–168 (GRS) and serine 191.

It belongs to the tetrahydrofolate dehydrogenase/cyclohydrolase family. In terms of assembly, homodimer.

The catalysed reaction is (6R)-5,10-methylene-5,6,7,8-tetrahydrofolate + NADP(+) = (6R)-5,10-methenyltetrahydrofolate + NADPH. It carries out the reaction (6R)-5,10-methenyltetrahydrofolate + H2O = (6R)-10-formyltetrahydrofolate + H(+). The protein operates within one-carbon metabolism; tetrahydrofolate interconversion. Its function is as follows. Catalyzes the oxidation of 5,10-methylenetetrahydrofolate to 5,10-methenyltetrahydrofolate and then the hydrolysis of 5,10-methenyltetrahydrofolate to 10-formyltetrahydrofolate. This Delftia acidovorans (strain DSM 14801 / SPH-1) protein is Bifunctional protein FolD.